The chain runs to 296 residues: Light-independent protochlorophyllide reductase iron-sulfur ATP-binding protein (296 aa).

ATP-binding positions include 39–44 (GIGKST) and Lys-68. Ser-43 contacts Mg(2+). [4Fe-4S] cluster contacts are provided by Cys-124 and Cys-158. 209 to 210 (NR) contacts ATP.

This sequence belongs to the NifH/BchL/ChlL family. In terms of assembly, homodimer. Protochlorophyllide reductase is composed of three subunits; ChlL, ChlN and ChlB. [4Fe-4S] cluster serves as cofactor.

It carries out the reaction chlorophyllide a + oxidized 2[4Fe-4S]-[ferredoxin] + 2 ADP + 2 phosphate = protochlorophyllide a + reduced 2[4Fe-4S]-[ferredoxin] + 2 ATP + 2 H2O. It participates in porphyrin-containing compound metabolism; chlorophyll biosynthesis (light-independent). In terms of biological role, component of the dark-operative protochlorophyllide reductase (DPOR) that uses Mg-ATP and reduced ferredoxin to reduce ring D of protochlorophyllide (Pchlide) to form chlorophyllide a (Chlide). This reaction is light-independent. The L component serves as a unique electron donor to the NB-component of the complex, and binds Mg-ATP. The sequence is that of Light-independent protochlorophyllide reductase iron-sulfur ATP-binding protein from Synechococcus sp. (strain CC9605).